The sequence spans 360 residues: G-protein coupled receptor 15 (360 aa).

Residues Met1–Ser33 are Extracellular-facing. The helical transmembrane segment at Val34 to Leu54 threads the bilayer. At Met55–Asp69 the chain is on the cytoplasmic side. Residues Ile70–Val90 form a helical membrane-spanning segment. Over Asp91 to Ser120 the chain is Extracellular. The chain crosses the membrane as a helical span at residues Val121–Ser141. The Cytoplasmic segment spans residues Arg142–Cys149. The helical transmembrane segment at Ala150–Leu170 threads the bilayer. The Extracellular portion of the chain corresponds to Ser171–Lys192. The chain crosses the membrane as a helical span at residues Leu193 to Thr213. The Cytoplasmic portion of the chain corresponds to Cys214–Ser239. A helical membrane pass occupies residues Ile240–Phe260. At Lys261–Met284 the chain is on the extracellular side. Residues Glu285–Phe305 form a helical membrane-spanning segment. Residues Asp306–Leu360 are Cytoplasmic-facing. Ser359 is subject to Phosphoserine.

This sequence belongs to the G-protein coupled receptor 1 family. In terms of assembly, interacts with adapter YWHAE; this interaction promotes ER-to-Golgi transport of GPR15. Post-translationally, phosphorylation is necessary for YWHAE binding and efficient surface expression. In terms of processing, O-glycosylated. Sialylated O-glycans in the N-terminal tail inhibits binding of GPR15LG. Sulfation is required for efficient binding of GPR15LG.

The protein resides in the cell membrane. G protein-coupled receptor that plays an important role in immune homeostasis. Acts via its natural ligand GPR15LG, a chemokine-like polypeptide strongly expressed in gastrointestinal tissues. GPR15-GPR15LG signaling axis regulates intestinal homeostasis and inflammation through the migration of immune cells. Controls thereby the specific homing of T-cells, particularly FOXP3+ regulatory T-cells (Tregs), to the large intestine lamina propria. Also required for skin localization of thymus-derived dendritic epidermal T-cells. Plays an important role in mediating cytoprotective function as well as angiogenesis of thrombomodulin. Mechanistically, preferentially signals through the Gi/o pathway to inhibit adenylate cyclase activity and activate a phosphatidylinositol-calcium second messenger system that regulates the release of Ca(2+) ions from intracellular stores. The polypeptide is G-protein coupled receptor 15 (GPR15) (Macaca mulatta (Rhesus macaque)).